A 163-amino-acid polypeptide reads, in one-letter code: Probable ribosome biogenesis protein RLP24 (163 aa).

It belongs to the eukaryotic ribosomal protein eL24 family. Associated with nucleolar and cytoplasmic pre-60S particles. At the end of biogenesis it dissociates from cytoplasmic pre-60S particles and is likely to be exchanged for its ribosomal homolog, RPL24.

It is found in the nucleus. The protein resides in the nucleolus. Involved in the biogenesis of the 60S ribosomal subunit. Ensures the docking of GTPBP4/NOG1 to pre-60S particles. The protein is Probable ribosome biogenesis protein RLP24 (RSL24D1) of Homo sapiens (Human).